A 283-amino-acid chain; its full sequence is S-adenosylmethionine mitochondrial carrier protein homolog (283 aa).

3 Solcar repeats span residues 11-84 (LKFF…GKQF), 93-178 (DSPY…FKLQ), and 187-275 (STPF…TTRI). 6 helical membrane-spanning segments follow: residues 14-34 (FHAL…LFPI), 55-75 (GIYK…ALFF), 99-119 (MAAA…VEIA), 152-172 (RGFG…FPLW), 190-210 (FSVA…TTPL), and 248-268 (FAGF…FFGF).

Belongs to the mitochondrial carrier (TC 2.A.29) family.

The protein resides in the mitochondrion inner membrane. Mitochondrial solute carriers shuttle metabolites, nucleotides, and cofactors through the mitochondrial inner membrane. May mediate the transport of S-adenosylmethionine (SAM) into the mitochondria. The polypeptide is S-adenosylmethionine mitochondrial carrier protein homolog (Drosophila melanogaster (Fruit fly)).